The primary structure comprises 1030 residues: Exportin-T (1030 aa).

This sequence belongs to the exportin family.

It localises to the nucleus. Its subcellular location is the cytoplasm. Functionally, tRNA nucleus export receptor which facilitates tRNA translocation across the nuclear pore complex. Involved in pre-tRNA splicing, probably by affecting the interaction of pre-tRNA with splicing endonuclease. The polypeptide is Exportin-T (los1) (Aspergillus niger (strain ATCC MYA-4892 / CBS 513.88 / FGSC A1513)).